The chain runs to 327 residues: 2-keto-3-deoxygluconate permease (327 aa).

10 helical membrane-spanning segments follow: residues 10–30 (IPGG…TFSP), 42–62 (GMIT…GASI), 73–93 (KSGT…AIAS), 95–115 (IIPE…LALV), 139–159 (AGAF…IILG), 163–183 (IASF…VGFA), 199–219 (VQTL…LTVI), 224–244 (LLGI…LIIA), 254–274 (TAGI…VLIA), and 289–309 (SLVA…TSIW).

This sequence belongs to the KdgT transporter family.

Its subcellular location is the cell inner membrane. The enzyme catalyses 2-dehydro-3-deoxy-D-gluconate(in) + H(+)(in) = 2-dehydro-3-deoxy-D-gluconate(out) + H(+)(out). Catalyzes the proton-dependent uptake of 2-keto-3-deoxygluconate (KDG) into the cell. This Escherichia coli O139:H28 (strain E24377A / ETEC) protein is 2-keto-3-deoxygluconate permease.